Reading from the N-terminus, the 457-residue chain is Metal tolerance protein C4 (457 aa).

The Cytoplasmic portion of the chain corresponds to 1 to 115 (MQSSHRILSR…IEINDQHSQR (115 aa)). A helical membrane pass occupies residues 116–136 (AVTTALWCNFLVFSLKFGVWW). At 137–141 (TSSSH) the chain is on the vacuolar side. A helical membrane pass occupies residues 142–162 (VIMAEVVHSVADFANQALLAY). Topologically, residues 163-183 (GLSSSRRAPDALHPYGYSKER) are cytoplasmic. Residues 184–204 (FVWSLISAVGIFCLGSGATIV) traverse the membrane as a helical segment. The Vacuolar segment spans residues 205–220 (NGVQNLWTSSPPPNME). Residues 221–241 (LAAVVIGGSFLIEGASLLVAI) traverse the membrane as a helical segment. Residues 242–267 (QSVKKGAAQEGMTIRDYIWRGHDPTS) lie on the Cytoplasmic side of the membrane. A helical transmembrane segment spans residues 268 to 288 (VAVMTEDGAAVAGLAIAAASL). At 289–297 (VAVRMTGNP) the chain is on the vacuolar side. The helical transmembrane segment at 298–318 (IYDPIGSIVVGNLLGMVAIFL) threads the bilayer. Topologically, residues 319–457 (IQRNRHALIG…HNPTPTDPSL (139 aa)) are cytoplasmic.

The protein belongs to the cation diffusion facilitator (CDF) transporter (TC 2.A.4) family.

The protein localises to the vacuole membrane. Involved in sequestration of excess metal in the cytoplasm into vacuoles to maintain metal homeostasis. This chain is Metal tolerance protein C4 (MTPC4), found in Arabidopsis thaliana (Mouse-ear cress).